The following is a 227-amino-acid chain: tRNA (guanine-N(7)-)-methyltransferase (227 aa).

The tract at residues 1–21 is disordered; it reads MPDMTMKSQPDRLYGRQRGHA. S-adenosyl-L-methionine is bound by residues glutamate 54, glutamate 79, aspartate 114, and aspartate 136. Residue aspartate 136 is part of the active site. Substrate is bound by residues lysine 140, aspartate 172, and 206 to 209; that span reads TRYE.

It belongs to the class I-like SAM-binding methyltransferase superfamily. TrmB family.

It catalyses the reaction guanosine(46) in tRNA + S-adenosyl-L-methionine = N(7)-methylguanosine(46) in tRNA + S-adenosyl-L-homocysteine. It functions in the pathway tRNA modification; N(7)-methylguanine-tRNA biosynthesis. Catalyzes the formation of N(7)-methylguanine at position 46 (m7G46) in tRNA. The chain is tRNA (guanine-N(7)-)-methyltransferase from Granulibacter bethesdensis (strain ATCC BAA-1260 / CGDNIH1).